The following is a 565-amino-acid chain: Proline--tRNA ligase (565 aa).

This sequence belongs to the class-II aminoacyl-tRNA synthetase family. ProS type 1 subfamily. As to quaternary structure, homodimer.

The protein resides in the cytoplasm. It catalyses the reaction tRNA(Pro) + L-proline + ATP = L-prolyl-tRNA(Pro) + AMP + diphosphate. In terms of biological role, catalyzes the attachment of proline to tRNA(Pro) in a two-step reaction: proline is first activated by ATP to form Pro-AMP and then transferred to the acceptor end of tRNA(Pro). As ProRS can inadvertently accommodate and process non-cognate amino acids such as alanine and cysteine, to avoid such errors it has two additional distinct editing activities against alanine. One activity is designated as 'pretransfer' editing and involves the tRNA(Pro)-independent hydrolysis of activated Ala-AMP. The other activity is designated 'posttransfer' editing and involves deacylation of mischarged Ala-tRNA(Pro). The misacylated Cys-tRNA(Pro) is not edited by ProRS. The polypeptide is Proline--tRNA ligase (Lactobacillus johnsonii (strain CNCM I-12250 / La1 / NCC 533)).